The sequence spans 1380 residues: MAQTLSFNGRRRVRKFFGKIPEVAEMPNLIEVQKASYDQFLMVEEPKGGRPDEGLQSVFKSVFPITDFSGASMLEFVSYEFEPPKFDVDECRQRDLTYAAPLKVTLRLIVFDIDEDTGAKSIKDIKEQSVYMGDMPLMTNNGTFIVNGTERVIVSQMHRSPGVFFDHDKGKSHSSGKLLFAARVIPYRGSWLDIEFDAKDIVYARIDRRRKIPVTSLLMALGMDGEEILSTFYTKSLYERSGDGWRIPFNAETLKGAKTVTDMIDADTGEVVVEGGKKLTPRLLRQLQDKGLKALKATDEDLYGLFLAEDIVNFQTGEIYLEAGDEIDEKTLPVILKAGFDEIPVLGIDHINVGAYIRNTLSADKNENRQDALFDIYRVMRPGEPPTMDSAEAMFNSLFFDAERYDLSAVGRVKMNMRLDLEVADTVRVLRKDDILAVVKMLVELRDGKGEIDDIDNLGNRRVRSVGELMENQYRLGLLRMERAIKERMSSIEIDTVMPQDLINAKPAAAAVREFFGSSQLSQFMDQVNPLSEITHKRRLSALGPGGLTRERAGFEVRDVHPTHYGRICPIETPEGPNIGLINSLATFARVNKYGFIESPYRRIIDGKVTTDVLYLSAMEEAKYYVAQANAELDAEGSFIEEFVVCRHAGEVMLAPRDNINLMDVSPKQLVSVAAALIPFLENDDANRALMGSNMQRQAVPLLRAEAPFVGTGMEPVVARDSGAAIGARRGGVVDQVDATRIVIRATEDLDPSKSGVDIYRLMKFQRSNQNTCVNQRPLVTVGDFVNKGDILADGPSTDLGDLALGRNVLVAFMPWNGYNYEDSILLSERIVADDVFTSIHIEEFEVMARDTKLGPEEITRDIPNVSEEALKNLDEAGIVYIGAEVQPGDILVGKITPKGESPMTPEEKLLRAIFGEKASDVRDTSMRMPPGTYGTVVEVRVFNRHGVEKDERAMAIEREEIERLAKDRDDEQAILDRNVYGRLIEMLRGQVALAGPKNFKKGTELSNAVVSEYPRSQWWMFAVEDEKVQGELEALRGQYDESKSHLEQRFMDKVEKVQRGDEMPPGVMKMVKVFVAVKRKIQPGDKMAGRHGNKGVVSRIVPVEDMPFLEDGTHVDIVLNPLGVPSRMNVGQILETHLGWACAGMGRQIGELIEAYKANGNIEPLRKTIDMVVGDGPKSDDVHNYDDASVLRLADQWKRGVSIATPVFDGAGEADVNEMLAMAGLKETGQSTLYDGRTGEQFDRQVTVGYIYMLKLNHLVDDKIHARSIGPYSLVTQQPLGGKAQFGGQRFGEMEVWALEAYGAAYTLQEMLTVKSDDVAGRTKVYEAIVRGDDTFEAGIPESFNVLVKEMRSLGLSVELENSKVDDLQAAGQLPDAAE.

The protein belongs to the RNA polymerase beta chain family. As to quaternary structure, the RNAP catalytic core consists of 2 alpha, 1 beta, 1 beta' and 1 omega subunit. When a sigma factor is associated with the core the holoenzyme is formed, which can initiate transcription.

The catalysed reaction is RNA(n) + a ribonucleoside 5'-triphosphate = RNA(n+1) + diphosphate. Functionally, DNA-dependent RNA polymerase catalyzes the transcription of DNA into RNA using the four ribonucleoside triphosphates as substrates. The protein is DNA-directed RNA polymerase subunit beta of Rhizobium rhizogenes (strain K84 / ATCC BAA-868) (Agrobacterium radiobacter).